The chain runs to 303 residues: Acetylglutamate kinase (303 aa).

Substrate contacts are provided by residues Gly73–Gly74, Arg95, and Asn194.

This sequence belongs to the acetylglutamate kinase family. ArgB subfamily.

It localises to the cytoplasm. It catalyses the reaction N-acetyl-L-glutamate + ATP = N-acetyl-L-glutamyl 5-phosphate + ADP. It functions in the pathway amino-acid biosynthesis; L-arginine biosynthesis; N(2)-acetyl-L-ornithine from L-glutamate: step 2/4. In terms of biological role, catalyzes the ATP-dependent phosphorylation of N-acetyl-L-glutamate. This is Acetylglutamate kinase from Saccharopolyspora erythraea (strain ATCC 11635 / DSM 40517 / JCM 4748 / NBRC 13426 / NCIMB 8594 / NRRL 2338).